Reading from the N-terminus, the 274-residue chain is S-methyl-5'-thioadenosine phosphorylase (274 aa).

Residues serine 20, 62-63 (RH), and 95-96 (SA) contribute to the phosphate site. Methionine 194 is a substrate binding site. Threonine 195 serves as a coordination point for phosphate. Position 218-220 (218-220 (DYD)) interacts with substrate.

This sequence belongs to the PNP/MTAP phosphorylase family. MTAP subfamily. As to quaternary structure, homohexamer. Dimer of a homotrimer.

It catalyses the reaction S-methyl-5'-thioadenosine + phosphate = 5-(methylsulfanyl)-alpha-D-ribose 1-phosphate + adenine. The protein operates within amino-acid biosynthesis; L-methionine biosynthesis via salvage pathway; S-methyl-5-thio-alpha-D-ribose 1-phosphate from S-methyl-5'-thioadenosine (phosphorylase route): step 1/1. In terms of biological role, catalyzes the reversible phosphorylation of S-methyl-5'-thioadenosine (MTA) to adenine and 5-methylthioribose-1-phosphate. Involved in the breakdown of MTA, a major by-product of polyamine biosynthesis. Responsible for the first step in the methionine salvage pathway after MTA has been generated from S-adenosylmethionine. Has broad substrate specificity with 6-aminopurine nucleosides as preferred substrates. This chain is S-methyl-5'-thioadenosine phosphorylase, found in Hyperthermus butylicus (strain DSM 5456 / JCM 9403 / PLM1-5).